The sequence spans 733 residues: DNA-binding protein SATB2 (733 aa).

Residues 1–47 are disordered; sequence MERRSESPCLRDSPDRRSGSPDVKGPPPVKVARLEQNGSPMGARGRP. Phosphoserine is present on S20. Residues K24 and K30 each participate in a glycyl lysine isopeptide (Lys-Gly) (interchain with G-Cter in SUMO2) cross-link. Position 39 is a phosphoserine (S39). The region spanning 57-158 is the CMP domain; sequence GLMIPVFCVV…VVTLKIQLQS (102 aa). K161 participates in a covalent cross-link: Glycyl lysine isopeptide (Lys-Gly) (interchain with G-Cter in SUMO2). Residues 161–234 enclose the CUTL domain; it reads KLEDLPAEQW…WYKKYKKIKV (74 aa). Residue K233 forms a Glycyl lysine isopeptide (Lys-Gly) (interchain with G-Cter in SUMO) linkage. K350 participates in a covalent cross-link: Glycyl lysine isopeptide (Lys-Gly) (interchain with G-Cter in SUMO); alternate. K350 participates in a covalent cross-link: Glycyl lysine isopeptide (Lys-Gly) (interchain with G-Cter in SUMO2); alternate. A DNA-binding region (CUT 1) is located at residues 350–437; that stretch reads KPEPTNSSVE…ERDRIYQDER (88 aa). Residues 435 to 473 form a disordered region; that stretch reads DERERSMNPNVSMVSSASSSPSSSRTPQAKTSTPTTDLP. The segment covering 441 to 458 has biased composition (low complexity); the sequence is MNPNVSMVSSASSSPSSS. S454 is modified (phosphoserine). Polar residues predominate over residues 459–470; sequence RTPQAKTSTPTT. Phosphothreonine is present on T467. Positions 473 to 560 form a DNA-binding region, CUT 2; it reads PIKVDGANIN…ERDVIYEEES (88 aa). K475 participates in a covalent cross-link: Glycyl lysine isopeptide (Lys-Gly) (interchain with G-Cter in SUMO2). Over residues 580–593 the composition is skewed to low complexity; that stretch reads QVLHRQQSQPAKES. 2 disordered regions span residues 580–617 and 694–733; these read QVLHRQQSQPAKESSPPREEAPPPPPPTEDSCAKKPRS and LLTESEENDSEEGSEEMYKVEAEEENADKSKAAPAEIDQR. S594 bears the Phosphoserine mark. Positions 615 to 674 form a DNA-binding region, homeobox; sequence PRSRTKISLEALGILQSFIHDVGLYPDQEAIHTLSAQLDLPKHTIIKFFQNQRYHVKHHG. A compositionally biased stretch (acidic residues) spans 694–708; the sequence is LLTESEENDSEEGSE. A compositionally biased stretch (basic and acidic residues) spans 709-733; it reads EMYKVEAEEENADKSKAAPAEIDQR. Residue K724 forms a Glycyl lysine isopeptide (Lys-Gly) (interchain with G-Cter in SUMO2) linkage.

The protein belongs to the CUT homeobox family. As to quaternary structure, interacts with ATF4 and RUNX2; resulting in enhanced DNA binding and transactivation by these transcription factors. Interacts with PIAS1. In terms of processing, sumoylated by PIAS1. Sumoylation promotes nuclear localization, but represses transcription factor activity. As to expression, high expression in adult brain, moderate expression in fetal brain, and weak expression in adult liver, kidney, and spinal cord and in select brain regions, including amygdala, corpus callosum, caudate nucleus, and hippocampus.

The protein resides in the nucleus matrix. Its function is as follows. Binds to DNA, at nuclear matrix- or scaffold-associated regions. Thought to recognize the sugar-phosphate structure of double-stranded DNA. Transcription factor controlling nuclear gene expression, by binding to matrix attachment regions (MARs) of DNA and inducing a local chromatin-loop remodeling. Acts as a docking site for several chromatin remodeling enzymes and also by recruiting corepressors (HDACs) or coactivators (HATs) directly to promoters and enhancers. Required for the initiation of the upper-layer neurons (UL1) specific genetic program and for the inactivation of deep-layer neurons (DL) and UL2 specific genes, probably by modulating BCL11B expression. Repressor of Ctip2 and regulatory determinant of corticocortical connections in the developing cerebral cortex. May play an important role in palate formation. Acts as a molecular node in a transcriptional network regulating skeletal development and osteoblast differentiation. The polypeptide is DNA-binding protein SATB2 (SATB2) (Homo sapiens (Human)).